The chain runs to 96 residues: Small ribosomal subunit protein bS18 (96 aa).

The protein belongs to the bacterial ribosomal protein bS18 family. In terms of assembly, part of the 30S ribosomal subunit. Forms a tight heterodimer with protein bS6.

Functionally, binds as a heterodimer with protein bS6 to the central domain of the 16S rRNA, where it helps stabilize the platform of the 30S subunit. The protein is Small ribosomal subunit protein bS18 of Borrelia garinii subsp. bavariensis (strain ATCC BAA-2496 / DSM 23469 / PBi) (Borreliella bavariensis).